The chain runs to 382 residues: Histidinol-phosphate aminotransferase (382 aa).

Residues 1–28 (MTSAPRPRPTLDDLPLREDLRGKSPYGA) are disordered. Positions 9–22 (PTLDDLPLREDLRG) are enriched in basic and acidic residues. Lysine 233 is subject to N6-(pyridoxal phosphate)lysine.

Belongs to the class-II pyridoxal-phosphate-dependent aminotransferase family. Histidinol-phosphate aminotransferase subfamily. In terms of assembly, homodimer. Requires pyridoxal 5'-phosphate as cofactor.

The enzyme catalyses L-histidinol phosphate + 2-oxoglutarate = 3-(imidazol-4-yl)-2-oxopropyl phosphate + L-glutamate. Its pathway is amino-acid biosynthesis; L-histidine biosynthesis; L-histidine from 5-phospho-alpha-D-ribose 1-diphosphate: step 7/9. The protein is Histidinol-phosphate aminotransferase of Mycobacterium marinum (strain ATCC BAA-535 / M).